Reading from the N-terminus, the 264-residue chain is Thymidylate synthase (264 aa).

R21 contributes to the dUMP binding site. H51 lines the (6R)-5,10-methylene-5,6,7,8-tetrahydrofolate pocket. DUMP is bound at residue 126–127; sequence RR. The Nucleophile role is filled by C146. DUMP contacts are provided by residues 166 to 169, N177, and 207 to 209; these read RSAD and HLY. D169 is a binding site for (6R)-5,10-methylene-5,6,7,8-tetrahydrofolate. A263 contributes to the (6R)-5,10-methylene-5,6,7,8-tetrahydrofolate binding site.

Belongs to the thymidylate synthase family. Bacterial-type ThyA subfamily. As to quaternary structure, homodimer.

It is found in the cytoplasm. The catalysed reaction is dUMP + (6R)-5,10-methylene-5,6,7,8-tetrahydrofolate = 7,8-dihydrofolate + dTMP. It participates in pyrimidine metabolism; dTTP biosynthesis. Catalyzes the reductive methylation of 2'-deoxyuridine-5'-monophosphate (dUMP) to 2'-deoxythymidine-5'-monophosphate (dTMP) while utilizing 5,10-methylenetetrahydrofolate (mTHF) as the methyl donor and reductant in the reaction, yielding dihydrofolate (DHF) as a by-product. This enzymatic reaction provides an intracellular de novo source of dTMP, an essential precursor for DNA biosynthesis. The polypeptide is Thymidylate synthase (Aromatoleum aromaticum (strain DSM 19018 / LMG 30748 / EbN1) (Azoarcus sp. (strain EbN1))).